The following is a 283-amino-acid chain: Acetyl-coenzyme A carboxylase carboxyl transferase subunit beta (283 aa).

Residues 29–283 form the CoA carboxyltransferase N-terminal domain; the sequence is LWVACPKCQQ…LKLHERGAHY (255 aa). Zn(2+) is bound by residues C33, C36, C51, and C54. A C4-type zinc finger spans residues 33–54; sequence CPKCQQSIYHKDLGYYRTCPVC.

The protein belongs to the AccD/PCCB family. In terms of assembly, acetyl-CoA carboxylase is a heterohexamer composed of biotin carboxyl carrier protein (AccB), biotin carboxylase (AccC) and two subunits each of ACCase subunit alpha (AccA) and ACCase subunit beta (AccD). Zn(2+) serves as cofactor.

It is found in the cytoplasm. The enzyme catalyses N(6)-carboxybiotinyl-L-lysyl-[protein] + acetyl-CoA = N(6)-biotinyl-L-lysyl-[protein] + malonyl-CoA. It functions in the pathway lipid metabolism; malonyl-CoA biosynthesis; malonyl-CoA from acetyl-CoA: step 1/1. In terms of biological role, component of the acetyl coenzyme A carboxylase (ACC) complex. Biotin carboxylase (BC) catalyzes the carboxylation of biotin on its carrier protein (BCCP) and then the CO(2) group is transferred by the transcarboxylase to acetyl-CoA to form malonyl-CoA. The polypeptide is Acetyl-coenzyme A carboxylase carboxyl transferase subunit beta (Latilactobacillus sakei subsp. sakei (strain 23K) (Lactobacillus sakei subsp. sakei)).